The following is a 129-amino-acid chain: uncharacterized protein (129 aa).

It localises to the cytoplasm. The protein resides in the cytosol. It is found in the nucleus. This is an uncharacterized protein from Schizosaccharomyces pombe (strain 972 / ATCC 24843) (Fission yeast).